Here is a 132-residue protein sequence, read N- to C-terminus: D-ribose pyranase (132 aa).

Residue histidine 20 is the Proton donor of the active site. Substrate contacts are provided by residues aspartate 28, histidine 99, and 121–123 (YSN).

This sequence belongs to the RbsD / FucU family. RbsD subfamily. As to quaternary structure, homodecamer.

Its subcellular location is the cytoplasm. It catalyses the reaction beta-D-ribopyranose = beta-D-ribofuranose. It functions in the pathway carbohydrate metabolism; D-ribose degradation; D-ribose 5-phosphate from beta-D-ribopyranose: step 1/2. Functionally, catalyzes the interconversion of beta-pyran and beta-furan forms of D-ribose. This Lactococcus lactis subsp. lactis (strain IL1403) (Streptococcus lactis) protein is D-ribose pyranase.